Here is a 251-residue protein sequence, read N- to C-terminus: HTH-type transcriptional regulator IolR (251 aa).

Residues 1 to 57 enclose the HTH deoR-type domain; that stretch reads MKLMRIQEMEEYILSHGTVSLDELCQVFNVSKNTVRRDINKLTEKGAIEKVYGGVTS. The H-T-H motif DNA-binding region spans 19–38; that stretch reads VSLDELCQVFNVSKNTVRRD.

In terms of biological role, iol operon repressor. The polypeptide is HTH-type transcriptional regulator IolR (iolR) (Bacillus subtilis (strain 168)).